Consider the following 350-residue polypeptide: Putative ATP-binding protein BRA0745/BS1330_II0738 (350 aa).

In terms of domain architecture, ABC transporter spans 4–234 (VSLRGISKTF…PANKFVAGFI (231 aa)). 36–43 (GPSGCGKS) contributes to the ATP binding site.

This sequence belongs to the ABC transporter superfamily. As to quaternary structure, the complex is composed of two ATP-binding proteins (BRA0745), two transmembrane proteins (BRA0749) and a solute-binding protein (BRA0748).

It is found in the cell inner membrane. In terms of biological role, probably part of an ABC transporter complex. Probably responsible for energy coupling to the transport system. The protein is Putative ATP-binding protein BRA0745/BS1330_II0738 of Brucella suis biovar 1 (strain 1330).